Reading from the N-terminus, the 520-residue chain is Glutamate--cysteine ligase (520 aa).

Belongs to the glutamate--cysteine ligase type 1 family. Type 1 subfamily.

The catalysed reaction is L-cysteine + L-glutamate + ATP = gamma-L-glutamyl-L-cysteine + ADP + phosphate + H(+). It functions in the pathway sulfur metabolism; glutathione biosynthesis; glutathione from L-cysteine and L-glutamate: step 1/2. This Sodalis glossinidius (strain morsitans) protein is Glutamate--cysteine ligase.